The following is a 230-amino-acid chain: ATP synthase subunit a 1 (230 aa).

5 helical membrane passes run 20 to 40, 78 to 98, 112 to 132, 174 to 194, and 195 to 215; these read ATIVFSWLVMLILVLGSWLIT, FLPFIGTLFLFITMANLLTIF, AALALCVFVAVPIYGIKNVGI, LLVAILISIVPLFFPAVMTLF, and GLLVGVIQAYVFTILAMVYIA.

It belongs to the ATPase A chain family. As to quaternary structure, F-type ATPases have 2 components, CF(1) - the catalytic core - and CF(0) - the membrane proton channel. CF(1) has five subunits: alpha(3), beta(3), gamma(1), delta(1), epsilon(1). CF(0) has four main subunits: a, b, b' and c.

It localises to the cellular thylakoid membrane. Its function is as follows. Key component of the proton channel; it plays a direct role in the translocation of protons across the membrane. In Crocosphaera subtropica (strain ATCC 51142 / BH68) (Cyanothece sp. (strain ATCC 51142)), this protein is ATP synthase subunit a 1.